The sequence spans 492 residues: Putative cytochrome P450 136 (492 aa).

Cysteine 439 is a binding site for heme.

It belongs to the cytochrome P450 family. Requires heme as cofactor.

This is Putative cytochrome P450 136 (cyp136) from Mycobacterium tuberculosis (strain CDC 1551 / Oshkosh).